Consider the following 286-residue polypeptide: ATP synthase gamma chain (286 aa).

Belongs to the ATPase gamma chain family. F-type ATPases have 2 components, CF(1) - the catalytic core - and CF(0) - the membrane proton channel. CF(1) has five subunits: alpha(3), beta(3), gamma(1), delta(1), epsilon(1). CF(0) has three main subunits: a, b and c.

The protein localises to the cell membrane. In terms of biological role, produces ATP from ADP in the presence of a proton gradient across the membrane. The gamma chain is believed to be important in regulating ATPase activity and the flow of protons through the CF(0) complex. In Ureaplasma urealyticum serovar 10 (strain ATCC 33699 / Western), this protein is ATP synthase gamma chain.